The primary structure comprises 339 residues: UDP-3-O-acylglucosamine N-acyltransferase (339 aa).

Histidine 248 serves as the catalytic Proton acceptor.

It belongs to the transferase hexapeptide repeat family. LpxD subfamily. Homotrimer.

The catalysed reaction is a UDP-3-O-[(3R)-3-hydroxyacyl]-alpha-D-glucosamine + a (3R)-hydroxyacyl-[ACP] = a UDP-2-N,3-O-bis[(3R)-3-hydroxyacyl]-alpha-D-glucosamine + holo-[ACP] + H(+). It participates in bacterial outer membrane biogenesis; LPS lipid A biosynthesis. In terms of biological role, catalyzes the N-acylation of UDP-3-O-acylglucosamine using 3-hydroxyacyl-ACP as the acyl donor. Is involved in the biosynthesis of lipid A, a phosphorylated glycolipid that anchors the lipopolysaccharide to the outer membrane of the cell. This is UDP-3-O-acylglucosamine N-acyltransferase from Caulobacter vibrioides (strain NA1000 / CB15N) (Caulobacter crescentus).